A 212-amino-acid chain; its full sequence is Adenylate kinase (212 aa).

10–15 provides a ligand contact to ATP; sequence GAGKGT. Residues 30-59 are NMP; the sequence is STGDMFRAAMANQTEMGRLAKSYIDKGELV. AMP contacts are provided by residues T31, R36, 57 to 59, 86 to 89, and Q93; these read ELV and GYPR. Residues 127 to 159 form an LID region; that stretch reads GRIINRKTGETFHKVFNPPVDYKEEDYYQREDD. ATP contacts are provided by residues R128 and 137 to 138; that span reads TF. The AMP site is built by R156 and R167. Q195 contacts ATP.

This sequence belongs to the adenylate kinase family. Monomer.

It localises to the cytoplasm. The catalysed reaction is AMP + ATP = 2 ADP. It functions in the pathway purine metabolism; AMP biosynthesis via salvage pathway; AMP from ADP: step 1/1. Catalyzes the reversible transfer of the terminal phosphate group between ATP and AMP. Plays an important role in cellular energy homeostasis and in adenine nucleotide metabolism. The sequence is that of Adenylate kinase from Streptococcus agalactiae serotype Ia (strain ATCC 27591 / A909 / CDC SS700).